The following is a 39-amino-acid chain: Photosystem II reaction center protein L (39 aa).

A helical transmembrane segment spans residues 18–38 (SLYLGLLLIAVLGILFSSYFF).

Belongs to the PsbL family. In terms of assembly, PSII is composed of 1 copy each of membrane proteins PsbA, PsbB, PsbC, PsbD, PsbE, PsbF, PsbH, PsbI, PsbJ, PsbK, PsbL, PsbM, PsbT, PsbX, PsbY, PsbZ, Psb30/Ycf12, peripheral proteins PsbO, CyanoQ (PsbQ), PsbU, PsbV and a large number of cofactors. It forms dimeric complexes.

It localises to the cellular thylakoid membrane. One of the components of the core complex of photosystem II (PSII). PSII is a light-driven water:plastoquinone oxidoreductase that uses light energy to abstract electrons from H(2)O, generating O(2) and a proton gradient subsequently used for ATP formation. It consists of a core antenna complex that captures photons, and an electron transfer chain that converts photonic excitation into a charge separation. This subunit is found at the monomer-monomer interface and is required for correct PSII assembly and/or dimerization. The polypeptide is Photosystem II reaction center protein L (Picosynechococcus sp. (strain ATCC 27264 / PCC 7002 / PR-6) (Agmenellum quadruplicatum)).